The sequence spans 813 residues: Probable E3 ubiquitin-protein ligase hulA (813 aa).

The region spanning 1–109 (MGSNLPAQPN…QMGGDEMLTR (109 aa)) is the C2 domain. Disordered stretches follow at residues 131–235 (NLST…GWER) and 251–351 (RTTT…YFVD). Polar residues predominate over residues 148–167 (VQSSTSSGLVPQVAPSSSHP). A compositionally biased stretch (low complexity) spans 188–215 (RVPSTTRPSSTAAPASAAGAAVSNSHGS). The region spanning 227–260 (GRLPAGWERREDNLGRTYYVDHNTRTTTWTRPSS) is the WW 1 domain. A compositionally biased stretch (polar residues) spans 251-264 (RTTTWTRPSSNYNE). Residues 265 to 292 (HAQRSQREANMQLERRAHQSRMLPEDRT) are compositionally biased toward basic and acidic residues. Positions 293-307 (GANSPNLPESSQQAH) are enriched in polar residues. Over residues 322–331 (ATGATTAGTG) the composition is skewed to low complexity. WW domains follow at residues 331 to 364 (GELP…DPRR) and 391 to 424 (GPLP…DPRL). The HECT domain maps to 480–813 (SASDLKKRLM…VEETLGFGQE (334 aa)). C781 (glycyl thioester intermediate) is an active-site residue.

Belongs to the RSP5/NEDD4 family. As to quaternary structure, interacts with creD.

It localises to the cytoplasm. The enzyme catalyses S-ubiquitinyl-[E2 ubiquitin-conjugating enzyme]-L-cysteine + [acceptor protein]-L-lysine = [E2 ubiquitin-conjugating enzyme]-L-cysteine + N(6)-ubiquitinyl-[acceptor protein]-L-lysine.. Its pathway is protein modification; protein ubiquitination. E3 ubiquitin-protein ligase which accepts ubiquitin from an E2 ubiquitin-conjugating enzyme in the form of a thioester and then directly transfers the ubiquitin to targeted substrates. Probably involved in the regulatory network controlling carbon source utilization. The protein is Probable E3 ubiquitin-protein ligase hulA (hulA) of Aspergillus fumigatus (strain CBS 144.89 / FGSC A1163 / CEA10) (Neosartorya fumigata).